The following is a 137-amino-acid chain: Profilin-3 (137 aa).

It belongs to the profilin family. Interacts with ACTRT3. In terms of tissue distribution, detected in round spermatids.

The protein resides in the cytoplasm. It localises to the cytoskeleton. Its subcellular location is the nucleus. Functionally, binds to actin and affects the structure of the cytoskeleton. Slightly reduces actin polymerization. Binds to poly-L-proline, phosphatidylinositol 3-phosphate (PtdIns(3)P), phosphatidylinositol 4,5-bisphosphate (PtdIns(4,5)P2), and phosphatidylinositol 4-phosphate (PtdIns(4)P). May be involved in spermatogenesis. This Rattus norvegicus (Rat) protein is Profilin-3 (Pfn3).